The sequence spans 358 residues: Photosystem II protein D1 (358 aa).

The next 3 membrane-spanning stretches (helical) occupy residues 28-45, 117-132, and 141-155; these read YVGWFGVLMVPTLLAAAI, HFLIGICCWLGRQWEL, and WICVAYSAPLSAAFA. Chlorophyll a is bound at residue H117. Residue W125 coordinates pheophytin a. Positions 169 and 188 each coordinate [CaMn4O5] cluster. The helical transmembrane segment at 196-217 threads the bilayer; sequence FHMIGVAGMFGGSLFSAMHGSL. Residue H197 coordinates chlorophyll a. A quinone-binding positions include H214 and 263 to 264; that span reads SF. Residue H214 coordinates Fe cation. Residue H271 coordinates Fe cation. Residues 273 to 287 form a helical membrane-spanning segment; that stretch reads FLAAWPVICIWITSL. [CaMn4O5] cluster is bound by residues H331, E332, D341, and A343. Positions 344–358 are excised as a propeptide; sequence AAESTPVALIAPAIG.

Belongs to the reaction center PufL/M/PsbA/D family. In terms of assembly, PSII is composed of 1 copy each of membrane proteins PsbA, PsbB, PsbC, PsbD, PsbE, PsbF, PsbH, PsbI, PsbJ, PsbK, PsbL, PsbM, PsbT, PsbX, PsbY, Psb30/Ycf12, peripheral proteins PsbO, CyanoQ (PsbQ), PsbU, PsbV and a large number of cofactors. It forms dimeric complexes. It depends on The D1/D2 heterodimer binds P680, chlorophylls that are the primary electron donor of PSII, and subsequent electron acceptors. It shares a non-heme iron and each subunit binds pheophytin, quinone, additional chlorophylls, carotenoids and lipids. D1 provides most of the ligands for the Mn4-Ca-O5 cluster of the oxygen-evolving complex (OEC). There is also a Cl(-1) ion associated with D1 and D2, which is required for oxygen evolution. The PSII complex binds additional chlorophylls, carotenoids and specific lipids. as a cofactor. Tyr-160 forms a radical intermediate that is referred to as redox-active TyrZ, YZ or Y-Z. Post-translationally, C-terminally processed by CtpA; processing is essential to allow assembly of the oxygen-evolving complex and thus photosynthetic growth.

The protein localises to the cellular thylakoid membrane. It carries out the reaction 2 a plastoquinone + 4 hnu + 2 H2O = 2 a plastoquinol + O2. In terms of biological role, photosystem II (PSII) is a light-driven water:plastoquinone oxidoreductase that uses light energy to abstract electrons from H(2)O, generating O(2) and a proton gradient subsequently used for ATP formation. It consists of a core antenna complex that captures photons, and an electron transfer chain that converts photonic excitation into a charge separation. The D1/D2 (PsbA/PsbD) reaction center heterodimer binds P680, the primary electron donor of PSII as well as several subsequent electron acceptors. The protein is Photosystem II protein D1 of Prochlorococcus marinus (strain MIT 9313).